The primary structure comprises 596 residues: UvrABC system protein C (596 aa).

One can recognise a GIY-YIG domain in the interval 14-91 (QQPGCYLMKD…IKKYDPRYNV (78 aa)). In terms of domain architecture, UVR spans 196-231 (KDIRKNLAGEMQKASEALNFERAKEIRDTIQHIDAT).

The protein belongs to the UvrC family. As to quaternary structure, interacts with UvrB in an incision complex.

The protein localises to the cytoplasm. In terms of biological role, the UvrABC repair system catalyzes the recognition and processing of DNA lesions. UvrC both incises the 5' and 3' sides of the lesion. The N-terminal half is responsible for the 3' incision and the C-terminal half is responsible for the 5' incision. The sequence is that of UvrABC system protein C from Oceanobacillus iheyensis (strain DSM 14371 / CIP 107618 / JCM 11309 / KCTC 3954 / HTE831).